Here is a 117-residue protein sequence, read N- to C-terminus: uncharacterized protein (117 aa).

This is an uncharacterized protein from Acidianus two-tailed virus (ATV).